We begin with the raw amino-acid sequence, 527 residues long: Cytochrome P450 monooxygenase aba2 (527 aa).

Residues 26-46 (TTVAVLVTVALIAQVLWKIFF) traverse the membrane as a helical segment. Residues Asn-189, Asn-420, and Asn-448 are each glycosylated (N-linked (GlcNAc...) asparagine). Heme is bound at residue Cys-460. Asn-464 carries N-linked (GlcNAc...) asparagine glycosylation.

It belongs to the cytochrome P450 family. Heme is required as a cofactor.

It localises to the membrane. Its pathway is hormone biosynthesis. Functionally, cytochrome P450 monooxygenase; part of the gene cluster that mediates the biosynthesis of abscisic acid (ABA), a phytohormone that acts antagonistically toward salicylic acid (SA), jasmonic acid (JA) and ethylene (ETH) signaling, to impede plant defense responses. The first step of the pathway catalyzes the reaction from farnesyl diphosphate to alpha-ionylideneethane performed by the alpha-ionylideneethane synthase aba3 via a three-step reaction mechanism involving 2 neutral intermediates, beta-farnesene and allofarnesene. The cytochrome P450 monooxygenase aba1 might then be involved in the conversion of alpha-ionylideneethane to alpha-ionylideneacetic acid. Alpha-ionylideneacetic acid is further converted to abscisic acid in 2 steps involving the cytochrome P450 monooxygenase aba2 and the short-chain dehydrogenase/reductase aba4, via the intermediates 1'-deoxy-ABA or 1',4'-trans-diol-ABA, depending on the order of action of these 2 enzymes. Aba2 is responsible for the hydroxylation of carbon atom C-1' and aba4 might be involved in the oxidation of the C-4' carbon atom. The chain is Cytochrome P450 monooxygenase aba2 (aba2) from Botryotinia fuckeliana (strain B05.10) (Noble rot fungus).